The chain runs to 342 residues: 4-hydroxy-2-oxovalerate aldolase (342 aa).

The region spanning I7–Q259 is the Pyruvate carboxyltransferase domain. R15–D16 is a substrate binding site. A Mn(2+)-binding site is contributed by D16. Residue H19 is the Proton acceptor of the active site. Substrate contacts are provided by S169 and H198. Residues H198 and H200 each contribute to the Mn(2+) site. Substrate is bound at residue Y289.

It belongs to the 4-hydroxy-2-oxovalerate aldolase family.

It carries out the reaction (S)-4-hydroxy-2-oxopentanoate = acetaldehyde + pyruvate. This is 4-hydroxy-2-oxovalerate aldolase from Alkalilimnicola ehrlichii (strain ATCC BAA-1101 / DSM 17681 / MLHE-1).